Reading from the N-terminus, the 866-residue chain is Protein aubergine (866 aa).

M1 carries the post-translational modification N-acetylmethionine. The segment at 1–61 is disordered; the sequence is MNLPPNPVIA…GGGDAQVGPS (61 aa). Symmetric dimethylarginine is present on residues R11, R13, R15, and R17. Gly residues predominate over residues 46-56; the sequence is ASGGNGGGGDA. The PAZ domain occupies 281-390; that stretch reads TLYNILSDAI…IIPELARATG (110 aa). The region spanning 555–852 is the Piwi domain; the sequence is IVMVVMRSPN…LAFLVAESIN (298 aa).

Belongs to the argonaute family. Piwi subfamily. As to quaternary structure, component of the ping-pong piRNA processing (4P) complex consisting of krimp, aub and AGO3. Interacts (via N-terminus when symmetrically dimethylated on arginine residues) with krimp (via tudor domain); this interaction requires methylation of at least one N-terminal arginie residue. Interacts with vas and AGO3. May form part of a piRNA processing complex consisting of tud, aub and AGO3. Interacts (when symmetrically dimethylated on arginine residues) with tud; methylation and/or interaction requires association with piRNA. Interacts (via N-terminus and when associated with piRNA) with csul/PRMT5; the interaction recruits the PRMT5 methylosome complex to modify N-terminal arginines by symmetrical dimethylation but involves residues other than the arginines to be modified. Forms a complex with smg, twin, AGO3, nanos mRNA and piRNAs that targets the nanos 3'-untranslated region, in early embryos. Interacts with nanos mRNA and rump (in an RNA-dependent manner). Interacts with papi and vret. Interacts with me31B. In terms of processing, symmetrical dimethylation of arginines (sDMA) on Arg-11, Arg-13 and/or Arg-15 by csul/PRMT5/DART5, is required for binding to tud, localization to the pole plasm and association with the correct piRNAs. SDMA on Arg-11, Arg-13, Arg-15 and/or Arg-17 is required for binding to krimp and stable recruitment to subregions of the nuage. Methylation state does not affect protein stability. SDMA plays an important role in ping-pong amplification of piRNAs and is essential for function in vivo. Methylation state functions as an indicator of its piRNA binding state. PiRNA binding promotes sDMA modification; piRNA binding induces a conformational change that exposes the N-terminal arginines, making them available to the methylosome complex. Expressed in ovary. In the germarium, found in germline stem and cyst cells. In egg chambers from stage 6, expressed both in nurse cells and oocytes. In embryos, accumulates in the pole cells, although low expression is detected throughout the entire embryo. In testis, expressed in germline stem cells, gonialblast and spermatogonia cells (at protein level). In the adult brain, expressed in the ellipsoid body, the mushroom body subdivision in the peduncle and the cell body layer. Expressed specifically in alpha'/beta' and gamma neurons.

It localises to the cytoplasm. The protein resides in the cytosol. It is found in the perinuclear region. Its subcellular location is the cytoplasmic ribonucleoprotein granule. Functionally, component of the perinuclear meiotic nuage, a germline-specific subcellular membraneless ribonucleoprotein compartment involved in production of transposable element-repressing Piwi-interacting RNA (piRNA)-induced silencing complexes (piRISCs), which are essential for maintaining germline integrity during oogenesis; essential for the formation and/or structural integrity of nuage particles. Acts via the Piwi-interacting RNA (piRNA) metabolic process, which mediates the repression of transposable elements during meiosis by forming complexes composed of piRNAs and Piwi proteins and governs the methylation and subsequent repression of transposons. Directly binds piRNAs, a class of 24 to 30 nucleotide RNAs that are generated by a Dicer-independent mechanism and are primarily derived from transposons and other repeated sequence elements. Shows RNA cleavage or slicer activity; including aub-piRNA complexes from ovary and testis. When loaded with guide piRNAs recognizes and cleaves complementary RNAs to repress their expression and produce complementary piRNAs. Together with Piwi protein AGO3 recruited to subregions of the perinuclear nuage by krimp, which coordinates their activity in the ping-pong amplification step of secondary piRNA biogenesis. Krimp recruits piRNA bound aub and unbound AGO3, bringing them into close proximity to facilitate the loading onto AGO3 of freshly cut piRNAs generated by aub cleavage of target sequences; krimp recognizes the piRNA loading state of the Piwi proteins via symmetrically dimethylated arginine modification in their N-terminus. Important for asymmetric ping-pong amplification to bias production towards antisense piRNAs capable of silencing transposable elements. Required for the localization of mael and krimp to the meiotic nuage. In ovary, associates predominantly with antisense piRNAs that contain uridine at their 5' end. In testis, associates with Su(Ste) antisense piRNAs (most abundant class of piRNAs found in complex with aub in testes) and negatively regulates Ste expression, most likely by cleaving its transcripts. Also in testis, may repress translation of vas when associated with a piRNA derived from chromosome X, termed AT-chX-1, whose sequence shows strong complementarity to vas mRNA. Involved in repression of long interspersed nuclear elements (LINEs) including HeT-A, I-element and TART LINEs. Repression of specialized telomeric retroelements HeT-A and TART is involved in telomere regulation; Drosophila telomeres being maintained by transposition of specialized telomeric retroelements. Also involved in telomeric trans-silencing, a repression mechanism by which a transposon or a transgene inserted in subtelomeric heterochromatin has the capacity to repress in trans, in the female germline, a homologous transposon, or transgene located in euchromatin. Involved in the suppression of meiotic drive of sex chromosomes and autosomes. Involved in transposon silencing in the adult brain. Required for dorsal-ventral as well as anterior-posterior patterning of the egg. Required during oogenesis for primordial germ cell formation and activation of RNA interference. During early oogenesis, required for osk mRNA silencing and polarization of the microtubule cytoskeleton. During mid-oogenesis, required for osk mRNA localization to the posterior pole and efficient translation of osk and grk. During embryogenesis, required for posterior localization of nanos (nos) mRNA, independently of osk, and pole cell formation. Forms a complex with smg, twin, AGO3 and specific piRNAs that targets nanos mRNA (and probably other maternal mRNAS) for deadenylation promoting its decay during early embryogenesis. The polypeptide is Protein aubergine (Drosophila melanogaster (Fruit fly)).